Here is a 192-residue protein sequence, read N- to C-terminus: Phosphoheptose isomerase (192 aa).

The 159-residue stretch at 34–192 folds into the SIS domain; it reads VVDAYKAGNK…VERELFVKGK (159 aa). Residue 49–51 participates in substrate binding; sequence NGG. The Zn(2+) site is built by His58 and Glu62. Substrate is bound by residues Glu62, 91 to 92, 117 to 119, Ser122, and Gln169; these read ND and STS. Zn(2+)-binding residues include Gln169 and His177.

This sequence belongs to the SIS family. GmhA subfamily. As to quaternary structure, homotetramer. It depends on Zn(2+) as a cofactor.

The protein resides in the cytoplasm. The catalysed reaction is 2 D-sedoheptulose 7-phosphate = D-glycero-alpha-D-manno-heptose 7-phosphate + D-glycero-beta-D-manno-heptose 7-phosphate. The protein operates within carbohydrate biosynthesis; D-glycero-D-manno-heptose 7-phosphate biosynthesis; D-glycero-alpha-D-manno-heptose 7-phosphate and D-glycero-beta-D-manno-heptose 7-phosphate from sedoheptulose 7-phosphate: step 1/1. In terms of biological role, catalyzes the isomerization of sedoheptulose 7-phosphate in D-glycero-D-manno-heptose 7-phosphate. In Citrifermentans bemidjiense (strain ATCC BAA-1014 / DSM 16622 / JCM 12645 / Bem) (Geobacter bemidjiensis), this protein is Phosphoheptose isomerase.